The following is a 291-amino-acid chain: MANNVLNRYLFEDLSVRGELVQLDEAYQRIISSKEYPAAVQKLLGELLVSTTLLTATLKFEGSITIQLQGDGPVSLAVINGDHNQQVRGVARWEGDIADDASLHEMMGKGYLVITIEPKKGERYQGVVGLEGENLTEVLEGYFANSEQLKTRLWIRTGEFEGKPHAAGMLIQVIPDGTGSPDDFEHLEQLTNTVKDEELFGLEANDLLYRLYNQDKVRVYEPQPVAFHCGCSRERSGAAIITVEKAEIYDILAEVGSVSLHCDYCGTTYTFDETEVTELYTQASGGNKTLH.

2 disulfides stabilise this stretch: Cys-229/Cys-231 and Cys-262/Cys-265.

Belongs to the HSP33 family. In terms of processing, under oxidizing conditions two disulfide bonds are formed involving the reactive cysteines. Under reducing conditions zinc is bound to the reactive cysteines and the protein is inactive.

It localises to the cytoplasm. Functionally, redox regulated molecular chaperone. Protects both thermally unfolding and oxidatively damaged proteins from irreversible aggregation. Plays an important role in the bacterial defense system toward oxidative stress. The chain is 33 kDa chaperonin from Vibrio parahaemolyticus serotype O3:K6 (strain RIMD 2210633).